Here is a 59-residue protein sequence, read N- to C-terminus: Cuticle protein 7 isoform b (59 aa).

The residue at position 1 (Gln1) is a Pyrrolidone carboxylic acid.

The sequence is that of Cuticle protein 7 isoform b from Limulus polyphemus (Atlantic horseshoe crab).